A 551-amino-acid chain; its full sequence is Alkaline/neutral invertase CINV1 (551 aa).

N-acetylmethionine is present on Met1. Phosphoserine is present on residues Ser11, Ser14, Ser44, and Ser61. Positions 50–74 are disordered; that stretch reads TGYSRHDGIHDSPRGRSVLDTPLSS. Over residues 53-63 the composition is skewed to basic and acidic residues; it reads SRHDGIHDSPR. Thr70 carries the post-translational modification Phosphothreonine. Phosphoserine is present on Ser547.

This sequence belongs to the glycosyl hydrolase 100 family. As to quaternary structure, forms homohexamers. Interacts with PIP5K9. Interaction with PIP5K9 represses CINV1 activity. Interacts with GRF1, GRF2, GRF3, GRF4, GRF5, GRF6, GRF7, GRF8 and GRF10; these interactions are dependent of the phosphorylation at Ser-547. Post-translationally, phosphorylated at Ser-547 by CPK3 and CPK21. As to expression, expressed in radicle, hypocotyls, root tips and vascular cylinder, leaf vasculature, shoot stipules, trichomes, stem, stigma apex and base of siliques.

The protein resides in the cytoplasm. It localises to the cytosol. It is found in the nucleus. It carries out the reaction Hydrolysis of terminal non-reducing beta-D-fructofuranoside residues in beta-D-fructofuranosides.. Functionally, cytosolic invertase that specifically cleaves sucrose into glucose and fructose and is involved in the regulation of multiple tissue development including primary root elongation, root hair growth, leaf and silique development, and floral transition. Is involved in osmotic stress-induced inhibition on lateral root growth by controlling the concentration of hexose in cells. May regulate sugar-mediated root development by controlling sucrose catabolism in root cells. Contributes to carbon partitioning and cellulose biosynthesis in seedlings. In Arabidopsis thaliana (Mouse-ear cress), this protein is Alkaline/neutral invertase CINV1.